Reading from the N-terminus, the 168-residue chain is D-aminoacyl-tRNA deacylase 2 (168 aa).

A Gly-transPro motif, allows the protein to recognize chirality of D-amino acids motif is present at residues 160-161 (GP).

Belongs to the DTD family. As to quaternary structure, homodimer.

The protein localises to the cytoplasm. It catalyses the reaction a D-aminoacyl-tRNA + H2O = a tRNA + a D-alpha-amino acid + H(+). The catalysed reaction is glycyl-tRNA(Ala) + H2O = tRNA(Ala) + glycine + H(+). The enzyme catalyses D-tyrosyl-tRNA(Tyr) + H2O = D-tyrosine + tRNA(Tyr). It carries out the reaction L-alanyl-tRNA(Thr) + H2O = tRNA(Thr) + L-alanine + H(+). Functionally, deacylates mischarged D-aminoacyl-tRNAs. Also deacylates mischarged glycyl-tRNA(Ala), protecting cells against glycine mischarging by AlaRS. Probably acts by rejecting L-amino acids from its binding site rather than specific recognition of D-amino acids. Catalyzes the hydrolysis of D-tyrosyl-tRNA(Tyr), has no activity on correctly charged L-tyrosyl-tRNA(Tyr). By recycling D-aminoacyl-tRNA to D-amino acids and free tRNA molecules, this enzyme counteracts the toxicity associated with the formation of D-aminoacyl-tRNA entities in vivo and helps enforce protein L-homochirality. In contrast to DTD1, deacylates L-Ala mischarged on tRNA(Thr)(G4.U69) by alanine-tRNA ligase AARS. Can deacylate L-Ala due to a relaxed specificity for substrate chirality caused by the trans conformation of the Gly-Pro motif in the active site. Also hydrolyzes correctly charged, achiral, glycyl-tRNA(Gly) in vitro, although in vivo EEF1A1/EF-Tu may protect cognate achiral glycyl-tRNA(Gly) from DTD2-mediated deacetylation. This chain is D-aminoacyl-tRNA deacylase 2 (DTD2), found in Homo sapiens (Human).